We begin with the raw amino-acid sequence, 98 residues long: UPF0473 protein LSL_1108 (98 aa).

The protein belongs to the UPF0473 family.

In Ligilactobacillus salivarius (strain UCC118) (Lactobacillus salivarius), this protein is UPF0473 protein LSL_1108.